Reading from the N-terminus, the 180-residue chain is MSSKNVKVAKPYADAFIEIANKGSVINDLNCIATALSESKDLQKAIANPLVSSAAKKDIIKSIFAGNVDENTVKFMMVLCDRGRIEYLDAIAETALILAYKQASIEMAYVASSVKLSSAQTEALVDKLKAMTKADQIKLELKVDESLIGGFKVQIGSRIIDTSVQNQLKQLSSYLGASVA.

Belongs to the ATPase delta chain family. In terms of assembly, F-type ATPases have 2 components, F(1) - the catalytic core - and F(0) - the membrane proton channel. F(1) has five subunits: alpha(3), beta(3), gamma(1), delta(1), epsilon(1). CF(0) has four main subunits: a(1), b(1), b'(1) and c(10-14). The alpha and beta chains form an alternating ring which encloses part of the gamma chain. F(1) is attached to F(0) by a central stalk formed by the gamma and epsilon chains, while a peripheral stalk is formed by the delta, b and b' chains.

Its subcellular location is the plastid. The protein localises to the chloroplast thylakoid membrane. F(1)F(0) ATP synthase produces ATP from ADP in the presence of a proton or sodium gradient. F-type ATPases consist of two structural domains, F(1) containing the extramembraneous catalytic core and F(0) containing the membrane proton channel, linked together by a central stalk and a peripheral stalk. During catalysis, ATP synthesis in the catalytic domain of F(1) is coupled via a rotary mechanism of the central stalk subunits to proton translocation. Functionally, this protein is part of the stalk that links CF(0) to CF(1). It either transmits conformational changes from CF(0) to CF(1) or is implicated in proton conduction. The sequence is that of ATP synthase subunit delta, chloroplastic from Rhodomonas salina (Cryptomonas salina).